Here is an 85-residue protein sequence, read N- to C-terminus: BmK AGP-SYPU2 (85 aa).

The signal sequence occupies residues Met1 to Ser19. Residues Lys21 to Asn83 form the LCN-type CS-alpha/beta domain. Cystine bridges form between Cys31-Cys82, Cys35-Cys55, Cys41-Cys65, and Cys45-Cys67.

It belongs to the long (4 C-C) scorpion toxin superfamily. Sodium channel inhibitor family. Alpha subfamily. As to expression, expressed by the venom gland.

The protein resides in the secreted. Its function is as follows. Alpha toxins bind voltage-independently at site-3 of sodium channels (Nav) and inhibit the inactivation of the activated channels, thereby blocking neuronal transmission. Shows analgesic activity when intraperitoneally injected into mice. The polypeptide is BmK AGP-SYPU2 (Olivierus martensii (Manchurian scorpion)).